The following is a 222-amino-acid chain: Pleckstrin homology domain-containing family B member 2 (222 aa).

The PH domain occupies 2–109 (AFVKSGWLLR…WKFTLQDSRT (108 aa)). Lys-20 lines the a 1,2-diacyl-sn-glycero-3-phospho-L-serine pocket.

Its subcellular location is the recycling endosome membrane. Functionally, involved in retrograde transport of recycling endosomes. This is Pleckstrin homology domain-containing family B member 2 (PLEKHB2) from Homo sapiens (Human).